The following is a 772-amino-acid chain: Glucocorticoid receptor (772 aa).

Over residues 1–15 the composition is skewed to basic and acidic residues; that stretch reads MDSKESLSPPGREEV. The disordered stretch occupies residues 1 to 22; that stretch reads MDSKESLSPPGREEVPSSVLRP. Residues 1–415 are modulating; that stretch reads MDSKESLSPP…TTAAGPPPKL (415 aa). The residue at position 25 (Arg-25) is an Omega-N-methylarginine. Positions 39-82 are disordered; the sequence is APVRVPASSPSLAPAAQPDSKQQRLAVDFPKGSASNAQQPDLSR. A compositionally biased stretch (low complexity) spans 44-58; it reads PASSPSLAPAAQPDS. Phosphoserine occurs at positions 47, 115, 136, and 143. The interval 132–186 is disordered; sequence NRSASGADNPRSTAPAAGSAAPTEGFPKTHSDLASERQNPKGQTGGSAGSAKLHP. The span at 143-156 shows a compositional bias: low complexity; sequence STAPAAGSAAPTEG. Residues 158–170 show a composition bias toward basic and acidic residues; it reads PKTHSDLASERQN. Ser-203, Ser-211, and Ser-226 each carry phosphoserine. Lys-258 participates in a covalent cross-link: Glycyl lysine isopeptide (Lys-Gly) (interchain with G-Cter in SUMO2). Glycyl lysine isopeptide (Lys-Gly) (interchain with G-Cter in SUMO); alternate cross-links involve residues Lys-277 and Lys-293. Glycyl lysine isopeptide (Lys-Gly) (interchain with G-Cter in SUMO2); alternate cross-links involve residues Lys-277 and Lys-293. Ser-307 and Ser-400 each carry phosphoserine. A Glycyl lysine isopeptide (Lys-Gly) (interchain with G-Cter in ubiquitin) cross-link involves residue Lys-414. 2 NR C4-type zinc fingers span residues 416 to 436 and 452 to 476; these read CLVCSDEASGCHYGVLTCGSC and CAGRNDCIIDKIRRKNCPACRYRKC. A DNA-binding region (nuclear receptor) is located at residues 416 to 481; sequence CLVCSDEASG…RYRKCLQAGM (66 aa). Residues Lys-475, Lys-487, Lys-489, and Lys-490 each carry the N6-acetyllysine modification. Positions 480–772 are interaction with CLOCK; sequence GMNLEARKTK…NIKKLLFHQK (293 aa). Residues 482–518 are hinge; that stretch reads NLEARKTKKKIKGIQQTSTGVSQETSENPSNRTVVPA. The segment at 494 to 513 is disordered; that stretch reads GIQQTSTGVSQETSENPSNR. The segment covering 499-513 has biased composition (polar residues); that stretch reads STGVSQETSENPSNR. The region spanning 519–753 is the NR LBD domain; sequence ALPQLTPTLV…FPEMLAEIIT (235 aa). Residues 527-692 form an interaction with CRY1 region; that stretch reads LVSLLEVIEP…EIRMTYIKEL (166 aa). Lys-698 participates in a covalent cross-link: Glycyl lysine isopeptide (Lys-Gly) (interchain with G-Cter in SUMO).

It belongs to the nuclear hormone receptor family. NR3 subfamily. Heteromultimeric cytoplasmic complex with HSP90AA1, HSPA1A/HSPA1B, and FKBP5 or another immunophilin such as PPID, STIP1, or the immunophilin homolog PPP5C. Upon ligand binding FKBP5 dissociates from the complex and FKBP4 takes its place, thereby linking the complex to dynein and mediating transport to the nucleus, where the complex dissociates. Probably forms a complex composed of chaperones HSP90 and HSP70, co-chaperones CDC37, PPP5C, TSC1 and client protein TSC2, CDK4, AKT, RAF1 and NR3C1; this complex does not contain co-chaperones STIP1/HOP and PTGES3/p23. Directly interacts with UNC45A. Binds to DNA as a homodimer, and as heterodimer with NR3C2 or the retinoid X receptor. Binds STAT5A and STAT5B homodimers and heterodimers. Interacts with NRIP1, POU2F1, POU2F2 and TRIM28. Interacts with several coactivator complexes, including the SMARCA4 complex, CREBBP/EP300, TADA2L (Ada complex) and p160 coactivators such as NCOA2 and NCOA6. Interaction with BAG1 inhibits transactivation. Interacts with HEXIM1 and TGFB1I1. Interacts with NCOA1. Interacts with NCOA3, SMARCA4, SMARCC1, SMARCD1, and SMARCE1. Interacts with CLOCK, CRY1 and CRY2 in a ligand-dependent fashion. Interacts with CIART. Interacts with RWDD3. Interacts with UBE2I/UBC9 and this interaction is enhanced in the presence of RWDD3. Interacts with GRIP1. Interacts with NR4A3 (via nuclear receptor DNA-binding domain), represses transcription activity of NR4A3 on the POMC promoter Nur response element (NurRE). Directly interacts with PNRC2 to attract and form a complex with UPF1 and DCP1A; the interaction leads to rapid mRNA degradation. Interacts with GSK3B. Interacts with FNIP1 and FNIP2. Interacts (via C-terminus) with HNRNPU (via C-terminus). Interacts with MCM3AP. Interacts (via domain NR LBD) with HSP90AA1 and HSP90AB1. In the absence of hormonal ligand, interacts with TACC1. Interacts (via NR LBD domain) with ZNF764 (via KRAB domain); the interaction regulates transcription factor activity of NR3C1 by directing its actions toward certain biologic pathways. Post-translationally, acetylation by CLOCK reduces its binding to glucocorticoid response elements and its transcriptional activity. Increased proteasome-mediated degradation in response to glucocorticoids. In terms of processing, phosphorylated in the absence of hormone; becomes hyperphosphorylated in the presence of glucocorticoid. The Ser-203, Ser-226 and Ser-399-phosphorylated forms are mainly cytoplasmic, and the Ser-211-phosphorylated form is nuclear. Phosphorylation at Ser-211 increases transcriptional activity. Phosphorylation at Ser-203, Ser-226 and Ser-399 decreases signaling capacity. Phosphorylation at Ser-399 may protect from glucocorticoid-induced apoptosis. Phosphorylation at Ser-203 and Ser-211 is not required in regulation of chromosome segregation. May be dephosphorylated by PPP5C, attenuates NR3C1 action. Post-translationally, ubiquitinated by UBR5, leading to its degradation: UBR5 specifically recognizes and binds ligand-bound NR3C1 when it is not associated with coactivators (NCOAs). In presence of NCOAs, the UBR5-degron is not accessible, preventing its ubiquitination and degradation. Sumoylation at Lys-277 and Lys-293 negatively regulates its transcriptional activity. Sumoylation at Lys-698 positively regulates its transcriptional activity in the presence of RWDD3. Sumoylation at Lys-277 and Lys-293 is dispensable whereas sumoylation at Lys-698 is critical for the stimulatory effect of RWDD3 on its transcriptional activity. Heat shock increases sumoylation in a RWDD3-dependent manner.

It localises to the cytoplasm. Its subcellular location is the nucleus. It is found in the mitochondrion. The protein localises to the cytoskeleton. The protein resides in the spindle. It localises to the microtubule organizing center. Its subcellular location is the centrosome. It is found in the chromosome. The protein localises to the nucleoplasm. Its function is as follows. Receptor for glucocorticoids (GC). Has a dual mode of action: as a transcription factor that binds to glucocorticoid response elements (GRE), both for nuclear and mitochondrial DNA, and as a modulator of other transcription factors. Affects inflammatory responses, cellular proliferation and differentiation in target tissues. Involved in chromatin remodeling. Plays a role in rapid mRNA degradation by binding to the 5' UTR of target mRNAs and interacting with PNRC2 in a ligand-dependent manner which recruits the RNA helicase UPF1 and the mRNA-decapping enzyme DCP1A, leading to RNA decay. Could act as a coactivator for STAT5-dependent transcription upon growth hormone (GH) stimulation and could reveal an essential role of hepatic GR in the control of body growth. Mediates glucocorticoid-induced apoptosis. Promotes accurate chromosome segregation during mitosis. May act as a tumor suppressor. May play a negative role in adipogenesis through the regulation of lipolytic and antilipogenic gene expression. This chain is Glucocorticoid receptor (NR3C1), found in Oryctolagus cuniculus (Rabbit).